Consider the following 580-residue polypeptide: Mucolipin-1 (580 aa).

Residues 1 to 38 (MTDPAGPRGSETERLLTPNPGYGTQVGPSPAPPTPPEE) are disordered. The Cytoplasmic segment spans residues 1-65 (MTDPAGPRGS…FRAKGRKPCK (65 aa)). The residue at position 10 (serine 10) is a Phosphoserine. The Dileucine motif; mediates targeting to lysosomes motif lies at 11 to 16 (ETERLL). Positions 42 to 62 (RRRLKYFFMSPCDKFRAKGRK) are interaction with phosphoinositides. A helical membrane pass occupies residues 66 to 86 (LMLQVVKILVVTVQLILFGLS). Topologically, residues 87–298 (NQLAVTFREE…VFRHGDNSFR (212 aa)) are extracellular. Positions 107–121 (LGYSDGADDTFAAYT) are extracellular/lumenal pore loop. Cysteine 166 and cysteine 192 are joined by a disulfide. N-linked (GlcNAc...) asparagine glycosylation occurs at asparagine 230. A disulfide bridge connects residues cysteine 253 and cysteine 284. Residues 299 to 321 (LLFDVVVILTCSLSFLLCARSLL) form a helical membrane-spanning segment. Topologically, residues 322-350 (RGFLLQNEFVRFMWRQRRRVISLWERLEF) are cytoplasmic. A helical transmembrane segment spans residues 351-371 (VNGWYILLVTSDVLTISGTIM). Residues 372 to 382 (KIGIEAKNLAS) lie on the Extracellular side of the membrane. A helical transmembrane segment spans residues 383–405 (YDVCSILLGTSTLLVWVGVIRYL). Residues 406-427 (TFFHNYNILIATLRVALPSVMR) lie on the Cytoplasmic side of the membrane. A helical transmembrane segment spans residues 428-448 (FCCCVAVIYLGYCFCGWIVLG). The Extracellular portion of the chain corresponds to 449–456 (PYHVKFRS). Positions 457 to 477 (LSMVSECLFSLINGDDMFVTF) form an intramembrane region, pore-forming. Residues 469-474 (NGDDMF) carry the Selectivity filter motif. Residues 478–491 (AAMQAQQGRSSLVW) are Extracellular-facing. The helical transmembrane segment at 492-513 (LFSQLYLYSFISLFIYMVLSLF) threads the bilayer. Topologically, residues 514–580 (IALITGAYDT…PSEEHSLLVN (67 aa)) are cytoplasmic. Residues serine 557 and serine 559 each carry the phosphoserine; by PAK modification. A required for palmitoylation and association with membranes region spans residues 565–567 (CCC). Positions 573 to 578 (EEHSLL) match the Dileucine internalization motif; mediates AP2 complex-dependent internalization motif.

It belongs to the transient receptor (TC 1.A.4) family. Polycystin subfamily. MCOLN1 sub-subfamily. In terms of assembly, homotetramer. Homooligomer. Can heterooligomerize with MCOLN2 or MCOLN3; heteromeric assemblies have different channel properties as compared to the respective homooligomers and may be tissue-specific. Interacts with PDCD6. Interacts with TMEM163. Interacts with LAPTM4B. Post-translationally, palmitoylated; involved in association with membranes. Phosphorylation by PKA inhibits channel activity. Dephosphorylation increases activity. In terms of processing, proteolytically cleaved probably involving multiple lysosomal proteases including cathepsin B; inhibits lysosomal channel activity.

It localises to the late endosome membrane. The protein resides in the lysosome membrane. The protein localises to the cytoplasmic vesicle membrane. Its subcellular location is the cell projection. It is found in the phagocytic cup. It localises to the cytoplasmic vesicle. The protein resides in the phagosome membrane. The protein localises to the cell membrane. The catalysed reaction is Ca(2+)(in) = Ca(2+)(out). It carries out the reaction Fe(2+)(in) = Fe(2+)(out). It catalyses the reaction Mg(2+)(in) = Mg(2+)(out). The enzyme catalyses K(+)(in) = K(+)(out). The catalysed reaction is Na(+)(in) = Na(+)(out). Channel activity is controlled by multiple regulatory mechanisms in different subcellular compartments. Channel function is transiently modulated by changes in Ca(2+) in a pH-dependent manner; pH changes modify the aggregation state of unitary channels; a negative cooperativity between extracellular/lumenal Ca(2+) and H(+) is suggested. Regulated by phosphoinositides in a compartment-specific manner: in lysosomes activated by PtdIns(3,5)P2 (Phosphatidylinositol 3,5-bisphosphate) and at the plasma membrane inhibited by PtdIns(4,5)P2 (Phosphatidylinositol 4,5-bisphosphate). In terms of biological role, nonselective cation channel probably playing a role in the regulation of membrane trafficking events and of metal homeostasis. Acts as a Ca(2+)-permeable cation channel with inwardly rectifying activity. Proposed to play a major role in Ca(2+) release from late endosome and lysosome vesicles to the cytoplasm, which is important for many lysosome-dependent cellular events, including the fusion and trafficking of these organelles, exocytosis and autophagy. Required for efficient uptake of large particles in macrophages in which Ca(2+) release from the lysosomes triggers lysosomal exocytosis. May also play a role in phagosome-lysosome fusion. Involved in lactosylceramide trafficking indicative for a role in the regulation of late endocytic membrane fusion/fission events. By mediating lysosomal Ca(2+) release is involved in regulation of mTORC1 signaling and in mTOR/TFEB-dependent lysosomal adaptation to environmental cues such as nutrient levels. Seems to act as lysosomal active oxygen species (ROS) sensor involved in ROS-induced TFEB activation and autophagy. Also functions as a Fe(2+) permeable channel in late endosomes and lysosomes. Also permeable to Mg(2+), Na(+). K(+) and Cs(+). Proposed to play a role in zinc homeostasis probably implicating its association with TMEM163. In adaptive immunity, TRPML2 and TRPML1 may play redundant roles in the function of the specialized lysosomes of B cells. Its function is as follows. May contribute to cellular lipase activity within the late endosomal pathway or at the cell surface which may be involved in processes of membrane reshaping and vesiculation, especially the growth of tubular structures. However, it is not known, whether it conveys the enzymatic activity directly, or merely facilitates the activity of an associated phospholipase. The sequence is that of Mucolipin-1 (MCOLN1) from Macaca fascicularis (Crab-eating macaque).